A 312-amino-acid polypeptide reads, in one-letter code: UDP-N-acetylenolpyruvoylglucosamine reductase (312 aa).

Residues 37-205 (VGGPADALVV…VCAEFALCPG (169 aa)) form the FAD-binding PCMH-type domain. The active site involves Arg185. The active-site Proton donor is Ser234. Glu304 is an active-site residue.

It belongs to the MurB family. FAD is required as a cofactor.

Its subcellular location is the cytoplasm. It catalyses the reaction UDP-N-acetyl-alpha-D-muramate + NADP(+) = UDP-N-acetyl-3-O-(1-carboxyvinyl)-alpha-D-glucosamine + NADPH + H(+). It functions in the pathway cell wall biogenesis; peptidoglycan biosynthesis. Functionally, cell wall formation. This is UDP-N-acetylenolpyruvoylglucosamine reductase from Syntrophus aciditrophicus (strain SB).